The following is a 724-amino-acid chain: Probable metal-nicotianamine transporter YSL8 (724 aa).

Residues 1–58 (MRKGGLTPDRDRQIEEHELQETGISPDIERLKRNINATPYQREEEEEDREEQEESVEG) are disordered. The segment covering 8 to 20 (PDRDRQIEEHELQ) has biased composition (basic and acidic residues). Phosphoserine is present on S25. Residues 43-56 (EEEEEDREEQEESV) are compositionally biased toward acidic residues. A run of 7 helical transmembrane segments spans residues 72–92 (LTIR…FIVM), 96–116 (LTTG…FFFV), 144–164 (CVVA…LFAM), 184–204 (LGWM…SVVP), 245–265 (VLGK…FFTA), 304–324 (IINI…WPLI), and 349–369 (VFIA…KVLI). The interval 386–407 (RSSLAHKEDPPASPASPLTPRI) is disordered. 8 consecutive transmembrane segments (helical) span residues 423-443 (IPSW…TAIL), 455-475 (IIVI…GAGL), 478-497 (WSLA…AWAG), 501-520 (GGLL…VSTA), 541-561 (FVSQ…VFWL), 603-623 (LMLC…KDCL), 641-661 (FFLG…LFVW), and 679-699 (GLIC…IAGV).

It belongs to the YSL (TC 2.A.67.2) family.

Its subcellular location is the membrane. In terms of biological role, may be involved in the transport of nicotianamine-chelated metals. The polypeptide is Probable metal-nicotianamine transporter YSL8 (YSL8) (Arabidopsis thaliana (Mouse-ear cress)).